We begin with the raw amino-acid sequence, 693 residues long: Pentatricopeptide repeat-containing protein At2g19280 (693 aa).

PPR repeat units follow at residues 200-234 (LETV…GIFP), 235-269 (SRGV…GRHL), 270-304 (NAAV…GIRP), 305-339 (DIVA…GISQ), 340-370 (DSVS…FRLR), 372-406 (NIFV…GLLP), 407-441 (DCVC…GNPP), 442-476 (SLTT…GLKL), 477-511 (DVVT…GISP), 512-546 (DVAT…GFVP), 547-581 (STLA…RMKP), 582-616 (DVVT…GLKP), and 617-651 (DVVL…GMLP).

Belongs to the PPR family. P subfamily.

The chain is Pentatricopeptide repeat-containing protein At2g19280 from Arabidopsis thaliana (Mouse-ear cress).